The primary structure comprises 172 residues: 6,7-dimethyl-8-ribityllumazine synthase (172 aa).

5-amino-6-(D-ribitylamino)uracil contacts are provided by residues Phe24, Ala58 to Glu60, and Ala82 to Ile84. Glu87–Thr88 is a binding site for (2S)-2-hydroxy-3-oxobutyl phosphate. His90 functions as the Proton donor in the catalytic mechanism. Asn115 provides a ligand contact to 5-amino-6-(D-ribitylamino)uracil. Arg129 contributes to the (2S)-2-hydroxy-3-oxobutyl phosphate binding site. Residues Ala150–Ala172 form a disordered region. Residues Leu154 to Ala172 are compositionally biased toward acidic residues.

This sequence belongs to the DMRL synthase family.

It catalyses the reaction (2S)-2-hydroxy-3-oxobutyl phosphate + 5-amino-6-(D-ribitylamino)uracil = 6,7-dimethyl-8-(1-D-ribityl)lumazine + phosphate + 2 H2O + H(+). It functions in the pathway cofactor biosynthesis; riboflavin biosynthesis; riboflavin from 2-hydroxy-3-oxobutyl phosphate and 5-amino-6-(D-ribitylamino)uracil: step 1/2. Its function is as follows. Catalyzes the formation of 6,7-dimethyl-8-ribityllumazine by condensation of 5-amino-6-(D-ribitylamino)uracil with 3,4-dihydroxy-2-butanone 4-phosphate. This is the penultimate step in the biosynthesis of riboflavin. This chain is 6,7-dimethyl-8-ribityllumazine synthase, found in Paraburkholderia phymatum (strain DSM 17167 / CIP 108236 / LMG 21445 / STM815) (Burkholderia phymatum).